A 1236-amino-acid chain; its full sequence is Calcium-activated potassium channel subunit alpha-1 (1236 aa).

Residues 1-21 (MANGGGGGGGSSGGGGGGGGS) are compositionally biased toward gly residues. The segment at 1–61 (MANGGGGGGG…SSSSSSSSSV (61 aa)) is disordered. Over 1-86 (MANGGGGGGG…VPCDSRGQRM (86 aa)) the chain is Extracellular. Positions 39 to 60 (SSSSSSSSSSSSSSSSSSSSSS) are enriched in low complexity. Residues 87–107 (WWAFLASSMVTFFGGLFIILL) traverse the membrane as a helical segment. Residues 108-178 (WRTLKYLWTV…MISAQTLTGR (71 aa)) lie on the Cytoplasmic side of the membrane. S-palmitoyl cysteine attachment occurs at residues Cys118, Cys119, and Cys121. The helical transmembrane segment at 179-199 (VLVVLVFALSIGALVIYFIDS) threads the bilayer. Over 200-214 (SNPIESCQNFYKDFT) the chain is Extracellular. The helical transmembrane segment at 215 to 235 (LQIDMAFNVFFLLYFGLRFIA) threads the bilayer. At 236–239 (ANDK) the chain is on the cytoplasmic side. A helical transmembrane segment spans residues 240-260 (LWFWLEVNSVVDFFTVPPVFV). Residues 261-264 (SVYL) are Extracellular-facing. A helical membrane pass occupies residues 265–285 (NRSWLGLRFLRALRLIQFSEI). Topologically, residues 286 to 300 (LQFLNILKTSNSIKL) are cytoplasmic. Residues 301–321 (VNLLSIFISTWLTAAGFIHLV) traverse the membrane as a helical segment. The Extracellular segment spans residues 322 to 335 (ENSGDPWENFQNNQ). Residues 336–358 (ALTYWECVYLLMVTMSTVGYGDV) constitute an intramembrane region (pore-forming). Positions 352–355 (TVGY) match the Selectivity for potassium motif. The Extracellular segment spans residues 359 to 367 (YAKTTLGRL). Residues 368 to 388 (FMVFFILGGLAMFASYVPEII) traverse the membrane as a helical segment. The Cytoplasmic segment spans residues 389 to 1236 (ELIGNRKKYG…KQKYVQEERL (848 aa)). The 143-residue stretch at 407-549 (RKHIVVCGHI…WNWKEGDDAI (143 aa)) folds into the RCK N-terminal 1 domain. Mg(2+) is bound by residues Glu439, Gln462, and Glu464. The segment S7 stretch occupies residues 556–576 (LGFIAQSCLAQGLSTMLANLF). Positions 613–633 (LSFPTVCELCFVKLKLLMIAI) are segment S8. Positions 677-681 (CKACH) are heme-binding motif. Positions 757 to 787 (EDEQPSTLSPKKKQRNGGMRNSPNTSPKLMR) are disordered. Thr763 is subject to Phosphothreonine. Phosphoserine is present on residues Ser765, Ser778, and Ser782. Residues 837–857 (VLSGHVVVCIFGDVSSALIGL) are segment S9. The region spanning 839–983 (SGHVVVCIFG…MDRSSPDNSP (145 aa)) is the RCK N-terminal 2 domain. Thr970 carries the post-translational modification Phosphothreonine. Ser978 and Ser982 each carry phosphoserine. Positions 1003-1025 (TELVNDTNVQFLDQDDDDDPDTE) match the Calcium bowl motif. Residues Gln1012, Asp1015, Asp1018, and Asp1020 each coordinate Ca(2+). A segment S10 region spans residues 1032 to 1052 (FACGTAFAVSVLDSLMSATYF). Over residues 1186 to 1211 (RASLSHSSHSSQSSSKKSSSVHSIPS) the composition is skewed to low complexity. Positions 1186-1236 (RASLSHSSHSSQSSSKKSSSVHSIPSTANRQNRPKSRESRDKQKYVQEERL) are disordered. Residues 1220–1236 (KSRESRDKQKYVQEERL) are compositionally biased toward basic and acidic residues. Phosphoserine occurs at positions 1221 and 1224.

This sequence belongs to the potassium channel family. Calcium-activated (TC 1.A.1.3) subfamily. KCa1.1/KCNMA1 sub-subfamily. Homotetramer; which constitutes the calcium-activated potassium channel. Interacts with RAB11B. Interacts with beta subunits KCNMB1, KCNMB2, KCNMB3 and KCNMB4. Interacts with gamma subunits LRRC26, LRRC38, LRRC52 and LRRC55. Beta and gamma subunits are accessory, and modulate its activity. Phosphorylated. Phosphorylation by kinases such as PKA and/or PKG. In smooth muscles, phosphorylation affects its activity. In terms of processing, palmitoylation by ZDHHC22 and ZDHHC23 within the intracellular linker between the S0 and S1 transmembrane domains regulates localization to the plasma membrane. Depalmitoylated by LYPLA1 and LYPLAL1, leading to retard exit from the trans-Golgi network. As to expression, widely expressed. Except in myocytes, it is almost ubiquitously expressed.

Its subcellular location is the cell membrane. The catalysed reaction is K(+)(in) = K(+)(out). Ethanol and carbon monoxide-bound heme increase channel activation. Heme inhibits channel activation. In terms of biological role, potassium channel activated by both membrane depolarization or increase in cytosolic Ca(2+) that mediates export of K(+). It is also activated by the concentration of cytosolic Mg(2+). Its activation dampens the excitatory events that elevate the cytosolic Ca(2+) concentration and/or depolarize the cell membrane. It therefore contributes to repolarization of the membrane potential. Plays a key role in controlling excitability in a number of systems, such as regulation of the contraction of smooth muscle, the tuning of hair cells in the cochlea, regulation of transmitter release, and innate immunity. In smooth muscles, its activation by high level of Ca(2+), caused by ryanodine receptors in the sarcoplasmic reticulum, regulates the membrane potential. In cochlea cells, its number and kinetic properties partly determine the characteristic frequency of each hair cell and thereby helps to establish a tonotopic map. Kinetics of KCNMA1 channels are determined by alternative splicing, phosphorylation status and its combination with modulating beta subunits. Highly sensitive to both iberiotoxin (IbTx) and charybdotoxin (CTX). Possibly induces sleep when activated by melatonin and through melatonin receptor MTNR1A-dependent dissociation of G-beta and G-gamma subunits, leading to increased sensitivity to Ca(2+) and reduced synaptic transmission. Its function is as follows. Potassium channel activated by both membrane depolarization or increase in cytosolic Ca(2+) that mediates export of K(+). This chain is Calcium-activated potassium channel subunit alpha-1, found in Homo sapiens (Human).